The sequence spans 496 residues: Aspartyl/glutamyl-tRNA(Asn/Gln) amidotransferase subunit B (496 aa).

Belongs to the GatB/GatE family. GatB subfamily. As to quaternary structure, heterotrimer of A, B and C subunits.

It catalyses the reaction L-glutamyl-tRNA(Gln) + L-glutamine + ATP + H2O = L-glutaminyl-tRNA(Gln) + L-glutamate + ADP + phosphate + H(+). The catalysed reaction is L-aspartyl-tRNA(Asn) + L-glutamine + ATP + H2O = L-asparaginyl-tRNA(Asn) + L-glutamate + ADP + phosphate + 2 H(+). Allows the formation of correctly charged Asn-tRNA(Asn) or Gln-tRNA(Gln) through the transamidation of misacylated Asp-tRNA(Asn) or Glu-tRNA(Gln) in organisms which lack either or both of asparaginyl-tRNA or glutaminyl-tRNA synthetases. The reaction takes place in the presence of glutamine and ATP through an activated phospho-Asp-tRNA(Asn) or phospho-Glu-tRNA(Gln). The sequence is that of Aspartyl/glutamyl-tRNA(Asn/Gln) amidotransferase subunit B from Natronomonas pharaonis (strain ATCC 35678 / DSM 2160 / CIP 103997 / JCM 8858 / NBRC 14720 / NCIMB 2260 / Gabara) (Halobacterium pharaonis).